The chain runs to 232 residues: Flagellar L-ring protein (232 aa).

The first 15 residues, 1-15 (MKKVLFYVLPFAFFG), serve as a signal peptide directing secretion. Residue cysteine 16 is the site of N-palmitoyl cysteine attachment. A lipid anchor (S-diacylglycerol cysteine) is attached at cysteine 16.

The protein belongs to the FlgH family. In terms of assembly, the basal body constitutes a major portion of the flagellar organelle and consists of four rings (L,P,S, and M) mounted on a central rod.

The protein resides in the cell outer membrane. It localises to the bacterial flagellum basal body. In terms of biological role, assembles around the rod to form the L-ring and probably protects the motor/basal body from shearing forces during rotation. This chain is Flagellar L-ring protein, found in Campylobacter jejuni subsp. doylei (strain ATCC BAA-1458 / RM4099 / 269.97).